A 388-amino-acid polypeptide reads, in one-letter code: Riboflavin biosynthesis protein RibBA (388 aa).

The DHBP synthase stretch occupies residues 1-186 (MEELREAFEE…MDDVWREFVK (186 aa)). Residues 21–22 (RE), aspartate 26, 125–129 (RKGHT), and glutamate 149 contribute to the D-ribulose 5-phosphate site. Glutamate 22 contacts Mg(2+). Histidine 128 provides a ligand contact to Mg(2+). Positions 187-388 (RKLLMKKKAE…LEEIFREVNS (202 aa)) are GTP cyclohydrolase II. Residue 235-239 (RIHSE) participates in GTP binding. The Zn(2+) site is built by cysteine 240, cysteine 251, and cysteine 253. GTP is bound by residues glutamine 256, 277–279 (EGR), and threonine 299. Aspartate 311 acts as the Proton acceptor; for GTP cyclohydrolase activity in catalysis. Arginine 313 acts as the Nucleophile; for GTP cyclohydrolase activity in catalysis. Residues threonine 334 and lysine 339 each contribute to the GTP site.

This sequence in the N-terminal section; belongs to the DHBP synthase family. It in the C-terminal section; belongs to the GTP cyclohydrolase II family. Requires Mg(2+) as cofactor. It depends on Mn(2+) as a cofactor. Zn(2+) serves as cofactor.

It carries out the reaction D-ribulose 5-phosphate = (2S)-2-hydroxy-3-oxobutyl phosphate + formate + H(+). The catalysed reaction is GTP + 4 H2O = 2,5-diamino-6-hydroxy-4-(5-phosphoribosylamino)-pyrimidine + formate + 2 phosphate + 3 H(+). Its pathway is cofactor biosynthesis; riboflavin biosynthesis; 2-hydroxy-3-oxobutyl phosphate from D-ribulose 5-phosphate: step 1/1. It functions in the pathway cofactor biosynthesis; riboflavin biosynthesis; 5-amino-6-(D-ribitylamino)uracil from GTP: step 1/4. Its function is as follows. Catalyzes the conversion of D-ribulose 5-phosphate to formate and 3,4-dihydroxy-2-butanone 4-phosphate. Catalyzes the conversion of GTP to 2,5-diamino-6-ribosylamino-4(3H)-pyrimidinone 5'-phosphate (DARP), formate and pyrophosphate. The polypeptide is Riboflavin biosynthesis protein RibBA (Thermotoga maritima (strain ATCC 43589 / DSM 3109 / JCM 10099 / NBRC 100826 / MSB8)).